The following is a 914-amino-acid chain: Isoleucine--tRNA ligase (914 aa).

Residues 57-67 (PYANGQIHMGH) carry the 'HIGH' region motif. Glutamate 554 is an L-isoleucyl-5'-AMP binding site. A 'KMSKS' region motif is present at residues 595–599 (KMSKS). An ATP-binding site is contributed by lysine 598. Cysteine 883, cysteine 886, cysteine 904, and cysteine 907 together coordinate Zn(2+).

Belongs to the class-I aminoacyl-tRNA synthetase family. IleS type 1 subfamily. Monomer. Zn(2+) serves as cofactor.

It localises to the cytoplasm. It catalyses the reaction tRNA(Ile) + L-isoleucine + ATP = L-isoleucyl-tRNA(Ile) + AMP + diphosphate. Catalyzes the attachment of isoleucine to tRNA(Ile). As IleRS can inadvertently accommodate and process structurally similar amino acids such as valine, to avoid such errors it has two additional distinct tRNA(Ile)-dependent editing activities. One activity is designated as 'pretransfer' editing and involves the hydrolysis of activated Val-AMP. The other activity is designated 'posttransfer' editing and involves deacylation of mischarged Val-tRNA(Ile). This chain is Isoleucine--tRNA ligase, found in Macrococcus caseolyticus (strain JCSC5402) (Macrococcoides caseolyticum).